The following is a 310-amino-acid chain: Thioredoxin reductase (310 aa).

34–41 contacts FAD; the sequence is NGMQPGGQ. C135 and C138 form a disulfide bridge. Residue 281 to 290 participates in FAD binding; it reads DVQDKIYRQA.

The protein belongs to the class-II pyridine nucleotide-disulfide oxidoreductase family. Homodimer. FAD is required as a cofactor.

It is found in the cytoplasm. The enzyme catalyses [thioredoxin]-dithiol + NADP(+) = [thioredoxin]-disulfide + NADPH + H(+). This chain is Thioredoxin reductase (trxB), found in Rickettsia felis (strain ATCC VR-1525 / URRWXCal2) (Rickettsia azadi).